The primary structure comprises 266 residues: Gas vesicle protein L (266 aa).

Belongs to the gas vesicle GvpF/GvpL family.

Its subcellular location is the gas vesicle. Its function is as follows. Might be involved in nucleating gas vesicle formation. A minor component of the gas vesicle. Gas vesicles are hollow, gas filled proteinaceous nanostructures found in some microorganisms. It is not clear what function gas vesicles perform in soil bacteria. The chain is Gas vesicle protein L from Streptomyces sp. (strain CB03234).